The chain runs to 297 residues: Molybdate/tungstate import ATP-binding protein WtpC (297 aa).

The ABC transporter domain occupies 2-226 (LKVNNLSKIW…PKNKKVAEFL (225 aa)). Position 32 to 39 (32 to 39 (GPSGAGKS)) interacts with ATP.

The protein belongs to the ABC transporter superfamily. Sulfate/tungstate importer (TC 3.A.1.6) family. As to quaternary structure, the complex is composed of two ATP-binding proteins (WtpC), two transmembrane proteins (WtpB) and a solute-binding protein (WtpA).

It localises to the cell membrane. The enzyme catalyses tungstate(in) + ATP + H2O = tungstate(out) + ADP + phosphate + H(+). Part of the ABC transporter complex WtpABC involved in molybdate/tungstate import. Responsible for energy coupling to the transport system. In Methanocaldococcus jannaschii (strain ATCC 43067 / DSM 2661 / JAL-1 / JCM 10045 / NBRC 100440) (Methanococcus jannaschii), this protein is Molybdate/tungstate import ATP-binding protein WtpC (wtpC).